A 977-amino-acid chain; its full sequence is Monofunctional C1-tetrahydrofolate synthase, mitochondrial (977 aa).

The N-terminal 31 residues, 1–31, are a transit peptide targeting the mitochondrion; that stretch reads MSVRLPLLLRQLGRQQLPSGPACRLRELCRS. The interval 29–71 is disordered; it reads CRSGSRSSSSGGGDPEGLRGRRLQDGQTFSSHGPGNPEAPGMD. The tract at residues 32-347 is methylenetetrahydrofolate dehydrogenase and cyclohydrolase; sequence GSRSSSSGGG…REQQHRRWRL (316 aa). Residue Lys-188 is modified to N6-acetyllysine; alternate. The residue at position 188 (Lys-188) is an N6-succinyllysine; alternate. The interval 348–977 is formyltetrahydrofolate synthetase; that stretch reads HCLKLQPLSP…TETEQVKGLF (630 aa). Ser-356 bears the Phosphoserine mark. Position 422–429 (422–429) interacts with ATP; that stretch reads TPLGEGKS. Position 595 is an N6-succinyllysine (Lys-595).

The protein in the N-terminal section; belongs to the tetrahydrofolate dehydrogenase/cyclohydrolase family. It in the C-terminal section; belongs to the formate--tetrahydrofolate ligase family. Homodimer.

It localises to the mitochondrion. It carries out the reaction (6S)-5,6,7,8-tetrahydrofolate + formate + ATP = (6R)-10-formyltetrahydrofolate + ADP + phosphate. It participates in one-carbon metabolism; tetrahydrofolate interconversion. In terms of biological role, may provide the missing metabolic reaction required to link the mitochondria and the cytoplasm in the mammalian model of one-carbon folate metabolism complementing thus the enzymatic activities of MTHFD2. The protein is Monofunctional C1-tetrahydrofolate synthase, mitochondrial (Mthfd1l) of Mus musculus (Mouse).